The chain runs to 413 residues: MNATYYLSKPLERRRSVGVAVGDVMVGGQNPVVVQSMTNTDTADVDATVSQVAALWQAGSQLVRITVDRDEAAAAVPKIRERLERLGFSIPLVGDFHYIGHKLLSEHPACAEALAKYRINPGNVGFGAKKDRQFAEIIEIASRYHKPIRIGVNWGSLDNALLTQLMNENAQQENPLSVAEVMRETVVQSALLSAALAEELGLGRDKIILSAKVSDVQDLIAVYTTLAERCDYALHLGLTEAGMGTKGVVASSVALGILLQQGIGDTIRISLTPEPGGDRTREVKVGQELLQVMGFRQFLPVVAACPGCGRTTSTVFQQLAQKIEADLHKNMPVWREKYPGVESLKVAVMGCIVNGPGESKHADIGISLPGVGESPAAPVFIEGQKVKTLRGDHIAEEFEGILSDYIHKRFGQG.

Residues Cys305, Cys308, Cys351, and Glu358 each coordinate [4Fe-4S] cluster.

Belongs to the IspG family. The cofactor is [4Fe-4S] cluster.

The enzyme catalyses (2E)-4-hydroxy-3-methylbut-2-enyl diphosphate + oxidized [flavodoxin] + H2O + 2 H(+) = 2-C-methyl-D-erythritol 2,4-cyclic diphosphate + reduced [flavodoxin]. It participates in isoprenoid biosynthesis; isopentenyl diphosphate biosynthesis via DXP pathway; isopentenyl diphosphate from 1-deoxy-D-xylulose 5-phosphate: step 5/6. Converts 2C-methyl-D-erythritol 2,4-cyclodiphosphate (ME-2,4cPP) into 1-hydroxy-2-methyl-2-(E)-butenyl 4-diphosphate. This Bartonella tribocorum (strain CIP 105476 / IBS 506) protein is 4-hydroxy-3-methylbut-2-en-1-yl diphosphate synthase (flavodoxin).